The primary structure comprises 318 residues: Protoheme IX farnesyltransferase (318 aa).

The next 9 membrane-spanning stretches (helical) occupy residues 37–57 (LVIF…HPVI), 58–78 (AFTA…LNMW), 100–120 (VTAR…VMTM), 122–142 (VLVN…YLVV), 155–175 (IVIG…AVTG), 182–202 (FVLF…LALY), 228–248 (IMLY…LGFA), 251–271 (LYMG…FGIW), and 291–311 (ILYL…GLGG).

This sequence belongs to the UbiA prenyltransferase family. Protoheme IX farnesyltransferase subfamily.

It is found in the cell inner membrane. It carries out the reaction heme b + (2E,6E)-farnesyl diphosphate + H2O = Fe(II)-heme o + diphosphate. It participates in porphyrin-containing compound metabolism; heme O biosynthesis; heme O from protoheme: step 1/1. Converts heme B (protoheme IX) to heme O by substitution of the vinyl group on carbon 2 of heme B porphyrin ring with a hydroxyethyl farnesyl side group. The protein is Protoheme IX farnesyltransferase of Parvibaculum lavamentivorans (strain DS-1 / DSM 13023 / NCIMB 13966).